The sequence spans 193 residues: uncharacterized protein (193 aa).

Arg8 is a substrate binding site. The Tele-phosphohistidine intermediate role is filled by His9. Positions 15, 21, and 58 each coordinate substrate. Glu82 (proton donor/acceptor) is an active-site residue. Residue His139 coordinates substrate.

This sequence belongs to the phosphoglycerate mutase family. GpmB subfamily.

Functionally, phosphatase with broad substrate specificity. Does not have phosphoglycerate mutase activity. This is an uncharacterized protein from Bacillus subtilis (strain 168).